Here is a 69-residue protein sequence, read N- to C-terminus: Small ribosomal subunit protein bS21 (69 aa).

Belongs to the bacterial ribosomal protein bS21 family.

This Hyphomonas neptunium (strain ATCC 15444) protein is Small ribosomal subunit protein bS21.